The sequence spans 447 residues: Elongation factor 1-alpha (447 aa).

The region spanning 5–230 is the tr-type G domain; it reads KFHINIVVIG…DQINDAKRPS (226 aa). The G1 stretch occupies residues 14–21; sequence GHVDSGKS. 14 to 21 provides a ligand contact to GTP; sequence GHVDSGKS. Residue Lys55 is modified to N6,N6-dimethyllysine. The G2 stretch occupies residues 70 to 74; that stretch reads GITID. Lys79 is modified (N6,N6,N6-trimethyllysine). The interval 91–94 is G3; it reads DAPG. GTP-binding positions include 91 to 95 and 153 to 156; these read DAPGH and NKMD. The tract at residues 153 to 156 is G4; that stretch reads NKMD. N6,N6,N6-trimethyllysine is present on Lys187. The G5 stretch occupies residues 194 to 196; that stretch reads SGF. Lys261 is subject to N6-methyllysine. Glu289 bears the 5-glutamyl glycerylphosphorylethanolamine mark. Lys306 is subject to N6,N6,N6-trimethyllysine. A 5-glutamyl glycerylphosphorylethanolamine modification is found at Glu362. Position 396 is an N6,N6,N6-trimethyllysine (Lys396).

It belongs to the TRAFAC class translation factor GTPase superfamily. Classic translation factor GTPase family. EF-Tu/EF-1A subfamily. As to expression, was detected in all tissues examined but was most abundant in roots and salt-adapted cultured cells.

The protein resides in the cytoplasm. This protein promotes the GTP-dependent binding of aminoacyl-tRNA to the A-site of ribosomes during protein biosynthesis. The polypeptide is Elongation factor 1-alpha (Nicotiana tabacum (Common tobacco)).